The following is a 552-amino-acid chain: Cholesterol oxidase (552 aa).

A signal peptide (tat-type signal) is located at residues 1–45 (MTDSRANRADATRGVASVSRRRFLAGAGLTAGAIALSSMSTSASA). Tyr66, Gly67, Glu86, Gly160, Asn164, Gly165, Met167, and Val295 together coordinate FAD. Residues Glu406 and His492 each act as proton acceptor in the active site. FAD contacts are provided by Gly520 and Phe532.

It belongs to the GMC oxidoreductase family. Requires FAD as cofactor. Post-translationally, predicted to be exported by the Tat system. The position of the signal peptide cleavage has been experimentally proven.

It localises to the secreted. It carries out the reaction cholesterol + O2 = cholest-5-en-3-one + H2O2. The enzyme catalyses cholest-5-en-3-one = cholest-4-en-3-one. Its pathway is steroid metabolism; cholesterol degradation. Bifunctional enzyme that catalyzes the oxidation and isomerization of cholesterol to cholestenone (cholest-4-en-3-one), an initial step in the cholesterol degradation process. This is Cholesterol oxidase from Brevibacterium sterolicum.